The primary structure comprises 300 residues: Ribosomal protein bS6--L-glutamate ligase (300 aa).

The 184-residue stretch at 104–287 folds into the ATP-grasp domain; it reads MQLLARQGID…IAGKMIRWIE (184 aa). ATP-binding positions include lysine 141, 178–179, aspartate 187, and 211–213; these read EY and RSN. Positions 248, 260, and 262 each coordinate Mg(2+). 3 residues coordinate Mn(2+): aspartate 248, glutamate 260, and asparagine 262.

It belongs to the RimK family. The cofactor is Mg(2+). Requires Mn(2+) as cofactor.

An L-glutamate ligase that catalyzes the ATP-dependent post-translational addition of glutamate residues to the C-terminus of ribosomal protein bS6 (RpsF). Is also able to catalyze the synthesis of poly-alpha-glutamate in vitro, via ATP hydrolysis from unprotected glutamate as substrate. The number of glutamate residues added to either RpsF or to poly-alpha-glutamate changes with pH. This chain is Ribosomal protein bS6--L-glutamate ligase, found in Escherichia coli O139:H28 (strain E24377A / ETEC).